A 110-amino-acid polypeptide reads, in one-letter code: MSCQQNQQQCQPPPKCPPKCTPKCPPKCPPKCPPQCPAPCSPAVSSCCGPSSGSCCGPSSGGCCSSGGGGCCLSHHRPRLFHRRRHQSPDCCESEPSGASGCCHSSGGCC.

It belongs to the LCE family. As to expression, skin-specific. Expression was readily detected in adult trunk skin, adult arm skin, fetal skin, penal skin, vulva, esophagus and tongue. Not expressed in the cervix, rectum, lung, colon, or placenta.

Precursors of the cornified envelope of the stratum corneum. This chain is Late cornified envelope protein 2D (LCE2D), found in Homo sapiens (Human).